The chain runs to 319 residues: Biotin synthase (319 aa).

The 227-residue stretch at 41–267 (YKGNKVKVCS…TPDIMICGGR (227 aa)) folds into the Radical SAM core domain. [4Fe-4S] cluster is bound by residues Cys-59, Cys-63, and Cys-66. Cys-192 provides a ligand contact to [2Fe-2S] cluster.

It belongs to the radical SAM superfamily. Biotin synthase family. Homodimer. It depends on [4Fe-4S] cluster as a cofactor. The cofactor is [2Fe-2S] cluster.

It catalyses the reaction (4R,5S)-dethiobiotin + (sulfur carrier)-SH + 2 reduced [2Fe-2S]-[ferredoxin] + 2 S-adenosyl-L-methionine = (sulfur carrier)-H + biotin + 2 5'-deoxyadenosine + 2 L-methionine + 2 oxidized [2Fe-2S]-[ferredoxin]. It participates in cofactor biosynthesis; biotin biosynthesis; biotin from 7,8-diaminononanoate: step 2/2. In terms of biological role, catalyzes the conversion of dethiobiotin (DTB) to biotin by the insertion of a sulfur atom into dethiobiotin via a radical-based mechanism. The polypeptide is Biotin synthase (Endomicrobium trichonymphae).